Consider the following 364-residue polypeptide: Fructose-1,6-bisphosphatase class 1 1 (364 aa).

Positions 99, 121, 123, and 124 each coordinate Mg(2+). Substrate-binding positions include 124-127 (DGSS) and Asn220. Glu292 is a binding site for Mg(2+).

Belongs to the FBPase class 1 family. In terms of assembly, homotetramer. Mg(2+) serves as cofactor.

The protein localises to the cytoplasm. The enzyme catalyses beta-D-fructose 1,6-bisphosphate + H2O = beta-D-fructose 6-phosphate + phosphate. The protein operates within carbohydrate biosynthesis; gluconeogenesis. This is Fructose-1,6-bisphosphatase class 1 1 from Albidiferax ferrireducens (strain ATCC BAA-621 / DSM 15236 / T118) (Rhodoferax ferrireducens).